A 76-amino-acid chain; its full sequence is U7-lycotoxin-Ls1b (76 aa).

The first 22 residues, 1–22, serve as a signal peptide directing secretion; sequence MKLISFTGLALLLIVSLIDVEA. The propeptide occupies 23–26; that stretch reads QNEG.

The protein belongs to the neurotoxin 19 (CSTX) family. 07 (U7-Lctx) subfamily. Contains 4 disulfide bonds. In terms of tissue distribution, expressed by the venom gland.

Its subcellular location is the secreted. The polypeptide is U7-lycotoxin-Ls1b (Lycosa singoriensis (Wolf spider)).